A 259-amino-acid polypeptide reads, in one-letter code: Cytosolic Fe-S cluster assembly factor Nubp2 homolog (259 aa).

An ATP-binding site is contributed by 14–21 (GKGGVGKS). The [4Fe-4S] cluster site is built by C188 and C191.

The protein belongs to the Mrp/NBP35 ATP-binding proteins family. NUBP2/CFD1 subfamily. In terms of assembly, heterotetramer of 2 Nubp1 and 2 Nubp2 chains. The cofactor is [4Fe-4S] cluster.

It is found in the cytoplasm. Functionally, component of the cytosolic iron-sulfur (Fe/S) protein assembly (CIA) machinery. Required for maturation of extramitochondrial Fe-S proteins. The Nubp1-Nubp2 heterotetramer forms a Fe-S scaffold complex, mediating the de novo assembly of an Fe-S cluster and its transfer to target apoproteins. This is Cytosolic Fe-S cluster assembly factor Nubp2 homolog from Aedes aegypti (Yellowfever mosquito).